Reading from the N-terminus, the 438-residue chain is Flotillin-2 (438 aa).

This sequence belongs to the band 7/mec-2 family. Flotillin subfamily. In terms of assembly, heterooligomeric complex of flotillins 1 and 2.

Its subcellular location is the membrane. May play a role in axon growth and regeneration. May be involved in epidermal cell adhesion and epidermal structure and function. This is Flotillin-2 from Drosophila melanogaster (Fruit fly).